Reading from the N-terminus, the 125-residue chain is RxLR effector protein Avh6 (125 aa).

The first 25 residues, 1–25 (MRLSSTTFVVLAAVLLASGTAVSKA), serve as a signal peptide directing secretion. Positions 48–70 (RFLRSHHTEDGEAKLSNYDNEER) match the RxLR-dEER motif.

It belongs to the RxLR effector family.

The protein localises to the secreted. It localises to the host cell. Effector that suppresses plant defense responses during the early stages of pathogen infection. Suppresses cell death induced by effectors and PAMPs in plant hosts. Triggers a hypersensitive response (HR) in the presence of Rps1d. Suppresses BAX-induced cell death and enhan,ced P.capsici infection in Nicotiana benthamiana. Also suppresses effector-triggered immunity induction by associating with Avr1b and Rps1b, suggesting a role in suppressing plant immunity. This is RxLR effector protein Avh6 from Phytophthora sojae (strain P6497) (Soybean stem and root rot agent).